Here is a 354-residue protein sequence, read N- to C-terminus: Serum paraoxonase/arylesterase 2 (354 aa).

Cysteines 42 and 352 form a disulfide. Positions 53 and 54 each coordinate Ca(2+). His-114 (proton acceptor) is an active-site residue. Positions 116, 167, 168, and 223 each coordinate Ca(2+). Asn-254 carries an N-linked (GlcNAc...) asparagine glycan. The Ca(2+) site is built by Asp-268 and Asn-269. N-linked (GlcNAc...) asparagine glycosylation is found at Asn-269 and Asn-323.

Belongs to the paraoxonase family. Homotrimer. Ca(2+) serves as cofactor. The signal sequence is not cleaved. In terms of tissue distribution, widely expressed with highest expression in liver, lung, placenta, testis and heart.

Its subcellular location is the membrane. It catalyses the reaction a phenyl acetate + H2O = a phenol + acetate + H(+). The enzyme catalyses an N-acyl-L-homoserine lactone + H2O = an N-acyl-L-homoserine + H(+). In terms of biological role, capable of hydrolyzing lactones and a number of aromatic carboxylic acid esters. Has antioxidant activity. Is not associated with high density lipoprotein. Prevents LDL lipid peroxidation, reverses the oxidation of mildly oxidized LDL, and inhibits the ability of MM-LDL to induce monocyte chemotaxis. The chain is Serum paraoxonase/arylesterase 2 (PON2) from Homo sapiens (Human).